The following is a 79-amino-acid chain: Small ribosomal subunit protein bS21 (79 aa).

The interval 58–79 is disordered; it reads ARKKMQREGLLPMKPKPMPGMR.

Belongs to the bacterial ribosomal protein bS21 family.

The chain is Small ribosomal subunit protein bS21 from Beijerinckia indica subsp. indica (strain ATCC 9039 / DSM 1715 / NCIMB 8712).